The following is a 158-amino-acid chain: MGRFTFVSFGLLVVFLSLSGTGADFDCIPGWSAYDRYCYQAFSEPKNWEDAESFCEEGVKTSHLVSIESSGEGDFVAQLVAEKIKTSFQYVWIGLRIQNKEQQCRSEWSDASSVNYENLFKQSSKKCYALKKGTELRTWFNVYCGRENPFVCKYTPEC.

The first 23 residues, 1–23 (MGRFTFVSFGLLVVFLSLSGTGA), serve as a signal peptide directing secretion. Disulfide bonds link Cys-27/Cys-38, Cys-55/Cys-152, and Cys-127/Cys-144. The C-type lectin domain occupies 34-153 (YDRYCYQAFS…CGRENPFVCK (120 aa)).

Belongs to the snaclec family. In terms of assembly, dimer and tetramer of heterodimers of alpha and beta subunits ((alphabeta)(2) and (alphabeta)(4)); disulfide-linked. These two multimeric forms are found. Post-translationally, the complex is glycosylated. In terms of tissue distribution, expressed by the venom gland.

The protein localises to the secreted. Potent platelet activator that acts via GPIb (GP1BA/GP1BB). After activation by the toxin, the receptor is redistributed on platelet surface thanks to cytoskeletal translocation. The indirect activation of integrin alpha-IIb/beta-3 (ITGA2B/ITGB3) also induced by the toxin is downstream the cytoskeletal translocation of GPIb. In Protobothrops mucrosquamatus (Taiwan habu), this protein is Snaclec mucetin subunit alpha.